The primary structure comprises 598 residues: Aspartate--tRNA(Asp/Asn) ligase (598 aa).

Residue Glu-177 participates in L-aspartate binding. Residues 201-204 form an aspartate region; it reads QLFK. Arg-223 is an L-aspartate binding site. ATP-binding positions include 223–225 and Gln-232; that span reads RDE. Position 456 (His-456) interacts with L-aspartate. Glu-493 is an ATP binding site. An L-aspartate-binding site is contributed by Arg-500. Residue 545–548 coordinates ATP; sequence GLDR.

This sequence belongs to the class-II aminoacyl-tRNA synthetase family. Type 1 subfamily. Homodimer.

It is found in the cytoplasm. It catalyses the reaction tRNA(Asx) + L-aspartate + ATP = L-aspartyl-tRNA(Asx) + AMP + diphosphate. In terms of biological role, aspartyl-tRNA synthetase with relaxed tRNA specificity since it is able to aspartylate not only its cognate tRNA(Asp) but also tRNA(Asn). Reaction proceeds in two steps: L-aspartate is first activated by ATP to form Asp-AMP and then transferred to the acceptor end of tRNA(Asp/Asn). This is Aspartate--tRNA(Asp/Asn) ligase from Prochlorococcus marinus (strain AS9601).